We begin with the raw amino-acid sequence, 323 residues long: Peroxisome biogenesis protein 20 (323 aa).

C8 participates in a covalent cross-link: Glycyl cysteine thioester (Cys-Gly) (interchain with G-Cter in ubiquitin). A Glycyl lysine isopeptide (Lys-Gly) (interchain with G-Cter in ubiquitin) cross-link involves residue K19. Short sequence motifs (wxxxF/Y motif) lie at residues 89 to 93 (WSSEF), 102 to 105 (WVED), and 141 to 145 (WTQEF).

It belongs to the peroxisomal targeting signal receptor family. In terms of assembly, interacts (via WxxxF/Y and LVxEF motifs) with PEX14; promoting translocation through the PEX13-PEX14 docking complex. Interacts with PEX7. Post-translationally, monoubiquitinated at Cys-8 by PEX2 during PEX20 passage through the PEX2-PEX10-PEX12 retrotranslocation channel: monoubiquitination acts as a signal for PEX20 extraction and is required for proper export from peroxisomes and recycling. When PEX5 recycling is compromised, polyubiquitinated at Lys-19 by PEX10 during its passage through the retrotranslocation channel, leading to its degradation.

Its subcellular location is the cytoplasm. The protein resides in the cytosol. The protein localises to the peroxisome matrix. Coreceptor required for the peroxisomal import of proteins containing a C-terminal PTS2-type peroxisomal targeting signal, such as 3-oxoacyl-CoA thiolase. Acts via its interaction with PEX7, promoting association between PEX7 bound to cargo proteins and the PEX13-PEX14 docking complex. PEX20 along with PEX7 and PTS2-containing cargo proteins are tranlocated into peroxisomes by passing through the PEX13-PEX14 docking complex. PEX20 coreceptor is then retrotranslocated into the cytosol, leading to release of bound cargo in the peroxisome matrix, and reset for a subsequent peroxisome import cycle. Also mediates peroxisomal import of proteins that do not contain PTS1- or PTS2-type peroxisomal targeting signals, such as acyl-CoA oxidases (Aox) izozymes. Import of acyl-CoA oxidases (Aox) izozymes is independent of PEX7. Required for PEX7 ubiquitination. The polypeptide is Peroxisome biogenesis protein 20 (Komagataella pastoris (Yeast)).